The chain runs to 142 residues: Nucleoside diphosphate kinase (142 aa).

Residues Lys11, Phe59, Arg87, Thr93, Arg104, and Asn114 each contribute to the ATP site. His117 acts as the Pros-phosphohistidine intermediate in catalysis.

Belongs to the NDK family. In terms of assembly, homotetramer. It depends on Mg(2+) as a cofactor.

It localises to the cytoplasm. The enzyme catalyses a 2'-deoxyribonucleoside 5'-diphosphate + ATP = a 2'-deoxyribonucleoside 5'-triphosphate + ADP. It catalyses the reaction a ribonucleoside 5'-diphosphate + ATP = a ribonucleoside 5'-triphosphate + ADP. Major role in the synthesis of nucleoside triphosphates other than ATP. The ATP gamma phosphate is transferred to the NDP beta phosphate via a ping-pong mechanism, using a phosphorylated active-site intermediate. The protein is Nucleoside diphosphate kinase of Yersinia pseudotuberculosis serotype I (strain IP32953).